The primary structure comprises 207 residues: LysM and putative peptidoglycan-binding domain-containing protein 2 (207 aa).

The 45-residue stretch at 61–105 (IEHRLSPSDTLQGIALKYGVTMEQIKRANKLFSTDCIFLRKSLNI) folds into the LysM domain. The tract at residues 186 to 207 (AQRLKEEDLRHDDSYATCSYQH) is disordered. Residues 188-199 (RLKEEDLRHDDS) are compositionally biased toward basic and acidic residues.

The protein is LysM and putative peptidoglycan-binding domain-containing protein 2 (lysmd2) of Xenopus tropicalis (Western clawed frog).